A 486-amino-acid polypeptide reads, in one-letter code: NADH-quinone oxidoreductase subunit N (486 aa).

14 helical membrane passes run 8-28, 36-56, 74-94, 104-124, 125-145, 160-180, 201-221, 239-259, 269-289, 298-318, 329-349, 376-396, 410-432, and 459-479; these read LTALLPLLIIMLTVITVILSI, FVAVFSILGLIFALCSLYFLI, ILYIGMILISSICTCIFSYPW, EFYLLVIISTLGAISLTISHH, MASFFINIELISLPMFGLIAY, IILSGVSSSFLLFGIAWVYSI, ILVVLFGISMILLSLFFKLSI, VLSFFSTAGKISVFSVLLNFL, VIYFILSLIIILSILVGNLMA, FLGYTSISQIGYLLIVLLVSH, AIYLCGYLFSNIACLGIVNLI, SVLTLVLISSAGIPMTLGFIG, WLIGFAFLIGSLLGLYCYLRIIL, and IVICISGIILLALGIYPNPLI.

This sequence belongs to the complex I subunit 2 family. As to quaternary structure, NDH-1 is composed of 13 different subunits. Subunits NuoA, H, J, K, L, M, N constitute the membrane sector of the complex.

Its subcellular location is the cell membrane. It carries out the reaction a quinone + NADH + 5 H(+)(in) = a quinol + NAD(+) + 4 H(+)(out). NDH-1 shuttles electrons from NADH, via FMN and iron-sulfur (Fe-S) centers, to quinones in the respiratory chain. The immediate electron acceptor for the enzyme in this species is believed to be ubiquinone. Couples the redox reaction to proton translocation (for every two electrons transferred, four hydrogen ions are translocated across the cytoplasmic membrane), and thus conserves the redox energy in a proton gradient. The sequence is that of NADH-quinone oxidoreductase subunit N from Buchnera aphidicola subsp. Acyrthosiphon pisum (strain APS) (Acyrthosiphon pisum symbiotic bacterium).